Consider the following 208-residue polypeptide: MTQGFFISFEGGEGAGKSTQIRRLADRLKAAGHDVIVTREPGGSPGAEAIRELLVNGAADRWSPVTESLLMYAARRDHIERVIRPGLARGAVVLCDRFADSTRAYQGAGGDAPASLIAALEEHVLGGTVPVLTLILDLPAEVGLQRAEARGGAARFESKGLAFHERLRAGYLEIARREPDRCVVIDADAELDAVTAAISDVVVQRLGL.

Position 11–18 (11–18 (GGEGAGKS)) interacts with ATP.

It belongs to the thymidylate kinase family.

It catalyses the reaction dTMP + ATP = dTDP + ADP. Functionally, phosphorylation of dTMP to form dTDP in both de novo and salvage pathways of dTTP synthesis. This is Thymidylate kinase (tmk) from Caulobacter vibrioides (strain ATCC 19089 / CIP 103742 / CB 15) (Caulobacter crescentus).